Consider the following 510-residue polypeptide: Probable gamma-aminobutyrate transaminase 3, mitochondrial (510 aa).

A mitochondrion-targeting transit peptide spans 1–41; it reads MICRSLLLLRSNAASKASNIVKHVAATGCLPKYSSEAPARY. Residue 166-167 coordinates pyridoxal 5'-phosphate; sequence GS. A substrate-binding site is contributed by Tyr199. A pyridoxal 5'-phosphate-binding site is contributed by Asp306. Residue Lys335 participates in substrate binding. Residue Lys335 is modified to N6-(pyridoxal phosphate)lysine.

The protein belongs to the class-III pyridoxal-phosphate-dependent aminotransferase family.

It localises to the mitochondrion. It catalyses the reaction 4-aminobutanoate + pyruvate = succinate semialdehyde + L-alanine. The enzyme catalyses 4-aminobutanoate + glyoxylate = succinate semialdehyde + glycine. Functionally, transaminase that degrades gamma-amino butyric acid (GABA). This chain is Probable gamma-aminobutyrate transaminase 3, mitochondrial, found in Oryza sativa subsp. japonica (Rice).